The chain runs to 202 residues: Matrix protein (202 aa).

The interval 12–33 (RDEDTQKPSPVSAPPDDDDLWL) is disordered. The PPXY motif signature appears at 35–38 (PPEY). Residues 115 to 151 (KLRRTLIFQWADSRGPLEGEELEYSQEITWDDDTEFV) form an essential for glycoprotein binding region.

This sequence belongs to the lyssavirus matrix protein family. Homomultimer. Interacts with nucleoprotein and with the cytoplasmic domain of glycoprotein. Interacts with host ATP6V1A; this interaction plays an important role in virion uncoating after viral entry.

It is found in the virion membrane. Its subcellular location is the host endomembrane system. The protein localises to the host cytoplasm. In terms of biological role, plays a major role in assembly, budding and uncoating of virion after membrane fusion. Completely covers the ribonucleoprotein coil and keep it in condensed bullet-shaped form. Inhibits viral transcription and stimulates replication. Plays a major role in early induction of TRAIL-mediated apoptosis in infected neurons. Inhibits the integrated stress response (ISR) in the infected cell by blocking the formation of stress granules. This is Matrix protein (M) from Rabies virus (strain PM1503/AVO1) (RABV).